The primary structure comprises 128 residues: Aspartate 1-decarboxylase (128 aa).

Ser-25 serves as the catalytic Schiff-base intermediate with substrate; via pyruvic acid. Ser-25 is subject to Pyruvic acid (Ser). Residue Thr-57 participates in substrate binding. Residue Tyr-58 is the Proton donor of the active site. Position 73–75 (73–75 (GAA)) interacts with substrate.

This sequence belongs to the PanD family. As to quaternary structure, heterooctamer of four alpha and four beta subunits. It depends on pyruvate as a cofactor. Post-translationally, is synthesized initially as an inactive proenzyme, which is activated by self-cleavage at a specific serine bond to produce a beta-subunit with a hydroxyl group at its C-terminus and an alpha-subunit with a pyruvoyl group at its N-terminus.

The protein localises to the cytoplasm. The enzyme catalyses L-aspartate + H(+) = beta-alanine + CO2. It functions in the pathway cofactor biosynthesis; (R)-pantothenate biosynthesis; beta-alanine from L-aspartate: step 1/1. Catalyzes the pyruvoyl-dependent decarboxylation of aspartate to produce beta-alanine. This Moorella thermoacetica (strain ATCC 39073 / JCM 9320) protein is Aspartate 1-decarboxylase.